Reading from the N-terminus, the 896-residue chain is Desmocollin-3 (896 aa).

Residues Met-1–Ala-31 form the signal peptide. Positions Cys-32–Arg-135 are excised as a propeptide. 5 Cadherin domains span residues Arg-136–Phe-243, Thr-244–Phe-355, Arg-356–Cys-472, Lys-473–Gln-580, and Asp-581–Lys-691. Residues Arg-136–Leu-695 lie on the Extracellular side of the membrane. The N-linked (GlcNAc...) asparagine glycan is linked to Asn-166. Asn-392 and Asn-547 each carry an N-linked (GlcNAc...) asparagine glycan. Asn-630 carries an N-linked (GlcNAc...) (high mannose) asparagine glycan. Residues Ala-696–Val-716 traverse the membrane as a helical segment. Over Thr-717 to Arg-896 the chain is Cytoplasmic.

May form homodimers. Interacts with DSG1; there is evidence to suggest that the interaction promotes cell-cell adhesion of keratinocytes. In terms of tissue distribution, expressed in the basal layers of epidermal stratified epithelia from birth (at protein level).

It is found in the cell membrane. The protein localises to the cell junction. The protein resides in the desmosome. Its subcellular location is the cytoplasm. Functionally, a component of desmosome cell-cell junctions which are required for positive regulation of cellular adhesion. Required for cell-cell adhesion in the epidermis, as a result required for the maintenance of the dermal cohesion and the dermal barrier function. Required for cell-cell adhesion of epithelial cell layers surrounding the telogen hair club, as a result plays an important role in telogen hair shaft anchorage. Essential for successful completion of embryo compaction and development beyond the 8-cell stage. In Mus musculus (Mouse), this protein is Desmocollin-3 (Dsc3).